A 599-amino-acid chain; its full sequence is UvrABC system protein C (599 aa).

A GIY-YIG domain is found at 15–93; it reads PCPGVYRMLD…IKALQPRYNV (79 aa). The 36-residue stretch at 202 to 237 folds into the UVR domain; that stretch reads QQVINELVIRMEEASGQLAFEQAAYYRDRIASLRQI.

It belongs to the UvrC family. Interacts with UvrB in an incision complex.

Its subcellular location is the cytoplasm. In terms of biological role, the UvrABC repair system catalyzes the recognition and processing of DNA lesions. UvrC both incises the 5' and 3' sides of the lesion. The N-terminal half is responsible for the 3' incision and the C-terminal half is responsible for the 5' incision. This is UvrABC system protein C from Nitrosococcus oceani (strain ATCC 19707 / BCRC 17464 / JCM 30415 / NCIMB 11848 / C-107).